Consider the following 87-residue polypeptide: Phosphoribosyl-ATP pyrophosphatase (87 aa).

Belongs to the PRA-PH family.

Its subcellular location is the cytoplasm. The enzyme catalyses 1-(5-phospho-beta-D-ribosyl)-ATP + H2O = 1-(5-phospho-beta-D-ribosyl)-5'-AMP + diphosphate + H(+). The protein operates within amino-acid biosynthesis; L-histidine biosynthesis; L-histidine from 5-phospho-alpha-D-ribose 1-diphosphate: step 2/9. The protein is Phosphoribosyl-ATP pyrophosphatase of Pseudarthrobacter chlorophenolicus (strain ATCC 700700 / DSM 12829 / CIP 107037 / JCM 12360 / KCTC 9906 / NCIMB 13794 / A6) (Arthrobacter chlorophenolicus).